Here is a 606-residue protein sequence, read N- to C-terminus: Elongation factor 4 (606 aa).

Positions 10–192 (IRKKNFCIIA…AICKYVPSPR (183 aa)) constitute a tr-type G domain. Residues 22-27 (DHGKST) and 139-142 (NKID) each bind GTP.

The protein belongs to the TRAFAC class translation factor GTPase superfamily. Classic translation factor GTPase family. LepA subfamily.

The protein localises to the cell inner membrane. It catalyses the reaction GTP + H2O = GDP + phosphate + H(+). Functionally, required for accurate and efficient protein synthesis under certain stress conditions. May act as a fidelity factor of the translation reaction, by catalyzing a one-codon backward translocation of tRNAs on improperly translocated ribosomes. Back-translocation proceeds from a post-translocation (POST) complex to a pre-translocation (PRE) complex, thus giving elongation factor G a second chance to translocate the tRNAs correctly. Binds to ribosomes in a GTP-dependent manner. The polypeptide is Elongation factor 4 (Borreliella burgdorferi (strain ATCC 35210 / DSM 4680 / CIP 102532 / B31) (Borrelia burgdorferi)).